We begin with the raw amino-acid sequence, 402 residues long: Enoyl-[acyl-carrier-protein] reductase [NADH] (402 aa).

NAD(+) is bound by residues 48–53 (GASSGY), 74–75 (FE), 111–112 (DA), and 140–141 (LA). Substrate is bound at residue Y226. The active-site Proton donor is the Y236. NAD(+) is bound by residues K245 and 274–276 (VVT).

This sequence belongs to the TER reductase family. As to quaternary structure, monomer.

It catalyses the reaction a 2,3-saturated acyl-[ACP] + NAD(+) = a (2E)-enoyl-[ACP] + NADH + H(+). The protein operates within lipid metabolism; fatty acid biosynthesis. Involved in the final reduction of the elongation cycle of fatty acid synthesis (FAS II). Catalyzes the reduction of a carbon-carbon double bond in an enoyl moiety that is covalently linked to an acyl carrier protein (ACP). This chain is Enoyl-[acyl-carrier-protein] reductase [NADH], found in Xanthomonas axonopodis pv. citri (strain 306).